The primary structure comprises 1512 residues: DNA (cytosine-5)-methyltransferase 2 (1512 aa).

Residues 1–22 (METKVGKQKKRSVDSNDDVSKE) show a composition bias toward basic and acidic residues. Disordered regions lie at residues 1–35 (METK…RNFK) and 634–678 (AIHE…GNSE). Positions 638 to 662 (VEEEEIEEDEEEDENEEDDIEEEAV) are enriched in acidic residues. BAH domains are found at residues 707 to 841 (ETVA…FSLP) and 909 to 1026 (TTLK…KQFP). An SAM-dependent MTase C5-type domain is found at 1071–1505 (LATLDIFAGC…RKLKEALYLK (435 aa)). The active site involves cysteine 1176.

The protein belongs to the class I-like SAM-binding methyltransferase superfamily. C5-methyltransferase family. In terms of tissue distribution, expressed at low levels in vegetative and floral organs.

It localises to the nucleus. It catalyses the reaction a 2'-deoxycytidine in DNA + S-adenosyl-L-methionine = a 5-methyl-2'-deoxycytidine in DNA + S-adenosyl-L-homocysteine + H(+). Its function is as follows. Maintains chromatin CpG methylation that plays a role in genomic imprinting, regulation of embryogenesis and seed viability. Required for proper patterns of CG DNA methylation in dividing cells. The sequence is that of DNA (cytosine-5)-methyltransferase 2 (MET2) from Arabidopsis thaliana (Mouse-ear cress).